The following is a 916-amino-acid chain: Probable dipeptidyl-aminopeptidase B (916 aa).

2 disordered regions span residues 1–35 and 67–86; these read MGRT…SGLS and DAEA…KLGS. The Cytoplasmic portion of the chain corresponds to 1-92; that stretch reads MGRTGDLENA…KLGSGSRTRQ (92 aa). Residues 21–35 show a composition bias toward low complexity; the sequence is TSGTSSRSSTDSGLS. Residues 93–113 traverse the membrane as a helical; Signal-anchor for type II membrane protein segment; that stretch reads IFWALVILCLGGWVLALVLFL. Residues 114-916 are Vacuolar-facing; sequence THGRASSQTA…VKRSVPAFAH (803 aa). Residues asparagine 349 and asparagine 640 are each glycosylated (N-linked (GlcNAc...) asparagine). Serine 754 (charge relay system) is an active-site residue. Asparagine 808 and asparagine 813 each carry an N-linked (GlcNAc...) asparagine glycan. Catalysis depends on charge relay system residues aspartate 831 and histidine 864.

It belongs to the peptidase S9B family.

It is found in the vacuole membrane. It catalyses the reaction Release of an N-terminal dipeptide, Xaa-Yaa-|-Zaa-, from a polypeptide, preferentially when Yaa is Pro, provided Zaa is neither Pro nor hydroxyproline.. Type IV dipeptidyl-peptidase which removes N-terminal dipeptides sequentially from polypeptides having unsubstituted N-termini provided that the penultimate residue is proline. This Aspergillus flavus (strain ATCC 200026 / FGSC A1120 / IAM 13836 / NRRL 3357 / JCM 12722 / SRRC 167) protein is Probable dipeptidyl-aminopeptidase B (dapB).